A 116-amino-acid polypeptide reads, in one-letter code: Flagellar transcriptional regulator FlhD (116 aa).

The protein belongs to the FlhD family. In terms of assembly, homodimer; disulfide-linked. Forms a heterohexamer composed of two FlhC and four FlhD subunits. Each FlhC binds a FlhD dimer, forming a heterotrimer, and a hexamer assembles by dimerization of two heterotrimers.

The protein resides in the cytoplasm. Its function is as follows. Functions in complex with FlhC as a master transcriptional regulator that regulates transcription of several flagellar and non-flagellar operons by binding to their promoter region. Activates expression of class 2 flagellar genes, including fliA, which is a flagellum-specific sigma factor that turns on the class 3 genes. Also regulates genes whose products function in a variety of physiological pathways. This is Flagellar transcriptional regulator FlhD from Enterobacter sp. (strain 22).